Reading from the N-terminus, the 173-residue chain is RNA pyrophosphohydrolase (173 aa).

The Nudix hydrolase domain maps to 6-149; that stretch reads GFRANVGIII…KRDVYRKVMK (144 aa). Positions 38-59 match the Nudix box motif; the sequence is GGVDDGESAEEAMYRELYEEVG.

The protein belongs to the Nudix hydrolase family. RppH subfamily. A divalent metal cation is required as a cofactor.

In terms of biological role, accelerates the degradation of transcripts by removing pyrophosphate from the 5'-end of triphosphorylated RNA, leading to a more labile monophosphorylated state that can stimulate subsequent ribonuclease cleavage. This is RNA pyrophosphohydrolase from Shewanella pealeana (strain ATCC 700345 / ANG-SQ1).